The following is a 494-amino-acid chain: MQVIETLAEGLKREIKVVIPAKDMEDKMNERLADVKDKIRINGFRPGKVPAAHLKKVYGKSIMADLVNEIVREQPAAILSSRGEKSATQPEIAMTEDKDEADKILTAQQDFEFTLSYEVLPPIELKSVKGIKVTREVIDISDDEVNEQVLKVAESARSYESKTGKAANGDRITMDYVGKVDDEAFEGGTDQGAELVIGSGRFIPGFEDQLVGVKAGEEKTITVTFPADYPAKNLAGKEATFDVTVKDVAAPGAVEINDELASKLGIESADRLKEIVRGQIESQYGSLTRQKLKRQILDQLDEMYKFDTPASLVDAEYNGIWSQVNNDLAQSGKTFEDEDTTEEKAREEYKTLAERRVRLGLVLSEIGEKAGVEVTEDEMQRAIYDQLRQYPGQEKQILEFFRSQPGAAASIRAPIFEEKVIDHLLTEIDVTDKKVTKEELLAEDEGEAKAETKKAAPKKKAAAKSEAAEAGEGEEAAPKKKAAPKKKASEDSAE.

In terms of domain architecture, PPIase FKBP-type spans 169–254 (GDRITMDYVG…VKDVAAPGAV (86 aa)). Residues 440–494 (LLAEDEGEAKAETKKAAPKKKAAAKSEAAEAGEGEEAAPKKKAAPKKKASEDSAE) form a disordered region.

This sequence belongs to the FKBP-type PPIase family. Tig subfamily.

It is found in the cytoplasm. The enzyme catalyses [protein]-peptidylproline (omega=180) = [protein]-peptidylproline (omega=0). Its function is as follows. Involved in protein export. Acts as a chaperone by maintaining the newly synthesized protein in an open conformation. Functions as a peptidyl-prolyl cis-trans isomerase. The polypeptide is Trigger factor (Rhizobium etli (strain ATCC 51251 / DSM 11541 / JCM 21823 / NBRC 15573 / CFN 42)).